The following is a 507-amino-acid chain: Subtilisin-like protease 1 (507 aa).

An N-terminal signal peptide occupies residues 1 to 19 (MGVFRFISISLAAVSAANA). The propeptide occupies 20–116 (AQILSMPHAQ…VEPDTIISVN (97 aa)). Positions 34-113 (SYIVMMKDDT…VMFVEPDTII (80 aa)) constitute an Inhibitor I9 domain. Residues 126–400 (SWGLARISNS…NVLISNGGAK (275 aa)) form the Peptidase S8 domain. Active-site charge relay system residues include D158 and H190. Residues 175–198 (GSNQVNDGDDRDGSGHGTHTSGTM) form a disordered region. N251 carries an N-linked (GlcNAc...) asparagine glycan. Positions 282 to 294 (NENQDARSSSPAS) are enriched in polar residues. Residues 282 to 312 (NENQDARSSSPASEPSVCTVGSSAEDDSRSS) form a disordered region. S345 acts as the Charge relay system in catalysis. The segment covering 378-394 (SSSITDVGPGTPTNVLI) has biased composition (polar residues). The interval 378 to 486 (SSSITDVGPG…YPGGDNFDFD (109 aa)) is disordered. Composition is skewed to pro residues over residues 405–428 (KPAP…PSQP) and 438–449 (EPFPGEPFPGEP). The segment covering 450–461 (FPGESSPGESAP) has biased composition (low complexity). Over residues 462–476 (APAPMPPSPQHPHTP) the composition is skewed to pro residues.

Belongs to the peptidase S8 family.

Its subcellular location is the secreted. Functionally, secreted subtilisin-like serine protease with keratinolytic activity that contributes to pathogenicity. The chain is Subtilisin-like protease 1 (SUB1) from Trichophyton tonsurans (Scalp ringworm fungus).